A 364-amino-acid chain; its full sequence is Mitogen-activated protein kinase 11 (364 aa).

In terms of domain architecture, Protein kinase spans 24 to 308 (LQGLRPVGSG…AAEALAHAYF (285 aa)). Residues 30–38 (VGSGAYGSV) and Lys-53 each bind ATP. Residue Glu-71 coordinates nilotinib. Asp-168 acts as the Proton acceptor in catalysis. Position 180 is a phosphothreonine; by MAP2K3, MAP2K4 and MAP2K6 (Thr-180). Residues 180–182 (TGY) carry the TXY motif. Tyr-182 carries the phosphotyrosine; by MAP2K3, MAP2K4 and MAP2K6 modification. The disordered stretch occupies residues 312–331 (HDPDDEPEAEPYDESVEAKE). Over residues 314–326 (PDDEPEAEPYDES) the composition is skewed to acidic residues. Phosphotyrosine; by ZAP70 is present on Tyr-323.

The protein belongs to the protein kinase superfamily. CMGC Ser/Thr protein kinase family. MAP kinase subfamily. As to quaternary structure, interacts with HDAC3 and DUSP16. Mg(2+) serves as cofactor. In terms of processing, dually phosphorylated on Thr-180 and Tyr-182 by MAP2K3/MKK3, MAP2K4/MKK4 and MAP2K6/MKK6, which activates the enzyme.

Its subcellular location is the cytoplasm. The protein localises to the nucleus. It catalyses the reaction L-seryl-[protein] + ATP = O-phospho-L-seryl-[protein] + ADP + H(+). The catalysed reaction is L-threonyl-[protein] + ATP = O-phospho-L-threonyl-[protein] + ADP + H(+). Its activity is regulated as follows. Activated by phosphorylation on threonine and tyrosine by MAP2K3/MKK3, MAP2K4/MKK4 and MAP2K6/MKK6. MAP2K3/MKK3 and MAP2K6/MKK6 are both essential for the activation of MAPK11 induced by environmental stress. HDAC3 interacts directly and selectively with MAPK11 to repress ATF2 transcriptional activity, and regulate TNF gene expression in LPS-stimulated cells. Inhibited by SB203580 and pyridinyl-imidazole related compounds. Its function is as follows. Serine/threonine kinase which acts as an essential component of the MAP kinase signal transduction pathway. MAPK11 is one of the four p38 MAPKs which play an important role in the cascades of cellular responses evoked by extracellular stimuli such as pro-inflammatory cytokines or physical stress leading to direct activation of transcription factors. Accordingly, p38 MAPKs phosphorylate a broad range of proteins and it has been estimated that they may have approximately 200 to 300 substrates each. MAPK11 functions are mostly redundant with those of MAPK14. Some of the targets are downstream kinases which are activated through phosphorylation and further phosphorylate additional targets. RPS6KA5/MSK1 and RPS6KA4/MSK2 can directly phosphorylate and activate transcription factors such as CREB1, ATF1, the NF-kappa-B isoform RELA/NFKB3, STAT1 and STAT3, but can also phosphorylate histone H3 and the nucleosomal protein HMGN1. RPS6KA5/MSK1 and RPS6KA4/MSK2 play important roles in the rapid induction of immediate-early genes in response to stress or mitogenic stimuli, either by inducing chromatin remodeling or by recruiting the transcription machinery. On the other hand, two other kinase targets, MAPKAPK2/MK2 and MAPKAPK3/MK3, participate in the control of gene expression mostly at the post-transcriptional level, by phosphorylating ZFP36 (tristetraprolin) and ELAVL1, and by regulating EEF2K, which is important for the elongation of mRNA during translation. MKNK1/MNK1 and MKNK2/MNK2, two other kinases activated by p38 MAPKs, regulate protein synthesis by phosphorylating the initiation factor EIF4E2. In the cytoplasm, the p38 MAPK pathway is an important regulator of protein turnover. For example, CFLAR is an inhibitor of TNF-induced apoptosis whose proteasome-mediated degradation is regulated by p38 MAPK phosphorylation. Ectodomain shedding of transmembrane proteins is regulated by p38 MAPKs as well. In response to inflammatory stimuli, p38 MAPKs phosphorylate the membrane-associated metalloprotease ADAM17. Such phosphorylation is required for ADAM17-mediated ectodomain shedding of TGF-alpha family ligands, which results in the activation of EGFR signaling and cell proliferation. Additional examples of p38 MAPK substrates are the FGFR1. FGFR1 can be translocated from the extracellular space into the cytosol and nucleus of target cells, and regulates processes such as rRNA synthesis and cell growth. FGFR1 translocation requires p38 MAPK activation. In the nucleus, many transcription factors are phosphorylated and activated by p38 MAPKs in response to different stimuli. Classical examples include ATF1, ATF2, ATF6, ELK1, PTPRH, DDIT3, TP53/p53 and MEF2C and MEF2A. The p38 MAPKs are emerging as important modulators of gene expression by regulating chromatin modifiers and remodelers. The promoters of several genes involved in the inflammatory response, such as IL6, IL8 and IL12B, display a p38 MAPK-dependent enrichment of histone H3 phosphorylation on 'Ser-10' (H3S10ph) in LPS-stimulated myeloid cells. This phosphorylation enhances the accessibility of the cryptic NF-kappa-B-binding sites marking promoters for increased NF-kappa-B recruitment. Phosphorylates methyltransferase DOT1L on 'Ser-834', 'Thr-900', 'Ser-902', 'Thr-984', 'Ser-1001', 'Ser-1009' and 'Ser-1104'. The sequence is that of Mitogen-activated protein kinase 11 (Mapk11) from Mus musculus (Mouse).